A 141-amino-acid polypeptide reads, in one-letter code: Lysozyme P (141 aa).

The signal sequence occupies residues 1-18 (MKAFLVICALTLTAVATQ). One can recognise a C-type lysozyme domain in the interval 20-141 (RTMDRCSLAR…GSLPSINSCF (122 aa)). Disulfide bonds link cysteine 25–cysteine 140, cysteine 46–cysteine 130, cysteine 81–cysteine 97, and cysteine 93–cysteine 111. Residues glutamate 51 and aspartate 69 contribute to the active site.

The protein belongs to the glycosyl hydrolase 22 family. Salivary gland.

The enzyme catalyses Hydrolysis of (1-&gt;4)-beta-linkages between N-acetylmuramic acid and N-acetyl-D-glucosamine residues in a peptidoglycan and between N-acetyl-D-glucosamine residues in chitodextrins.. In terms of biological role, unlikely to play an active role in the humoral immune defense. May have a function in the digestion of bacteria in the food. This is Lysozyme P (LysP) from Drosophila melanogaster (Fruit fly).